The sequence spans 379 residues: Gap junction alpha-1 protein (379 aa).

Residues 2-23 (GDWSALGRLLDKVQAYSTAGGK) are Cytoplasmic-facing. A helical transmembrane segment spans residues 24–44 (VWLSVLFIFRILLLGTAVESA). The Extracellular portion of the chain corresponds to 45 to 76 (WGDEQSAFVCNTQQPGCENVCYDKSFPISHVR). Intrachain disulfides connect cysteine 54–cysteine 192 and cysteine 187–cysteine 198. A helical transmembrane segment spans residues 77–97 (FWVLQIIFVSTPTLLYLAHVF). The Cytoplasmic portion of the chain corresponds to 98-163 (YLMRKEEKLN…TYIISILFKS (66 aa)). A helical membrane pass occupies residues 164–184 (VFEVGFIIIQWYMYGFSLSAI). At 185-207 (YTCKRDPCPHQVDCFLSRPTEKT) the chain is on the extracellular side. Residues 208-228 (IFIWFMLIVSIVSLALNIIEL) traverse the membrane as a helical segment. Residues 229-379 (FYVTYKSIKD…SRPRPDDLEI (151 aa)) are Cytoplasmic-facing. The tract at residues 322-379 (STISNTHAQPFDFSDEHQNTKKMAPGHEMQPLTILDQRPSSRASSHASSRPRPDDLEI) is disordered. A compositionally biased stretch (low complexity) spans 359–371 (RPSSRASSHASSR).

It belongs to the connexin family. Alpha-type (group II) subfamily. In terms of assembly, a connexon is composed of a hexamer of connexins. Interacts with TMEM65. As to expression, expressed in most tissues. Highest levels found in eye and brain.

The protein localises to the cell membrane. Its subcellular location is the cell junction. The protein resides in the gap junction. Functionally, one gap junction consists of a cluster of closely packed pairs of transmembrane channels, the connexons, through which materials of low MW diffuse from one cell to a neighboring cell. Plays an essential role in gap junction communication in the ventricles. The chain is Gap junction alpha-1 protein (gja1) from Xenopus laevis (African clawed frog).